The primary structure comprises 292 residues: 2-(5''-triphosphoribosyl)-3'-dephosphocoenzyme-A synthase (292 aa).

This sequence belongs to the CitG/MdcB family.

It catalyses the reaction 3'-dephospho-CoA + ATP = 2'-(5''-triphospho-alpha-D-ribosyl)-3'-dephospho-CoA + adenine. In terms of biological role, catalyzes the formation of 2-(5''-triphosphoribosyl)-3'-dephosphocoenzyme-A, the precursor of the prosthetic group of the holo-acyl carrier protein (gamma chain) of citrate lyase, from ATP and dephospho-CoA. The chain is 2-(5''-triphosphoribosyl)-3'-dephosphocoenzyme-A synthase from Escherichia coli (strain SMS-3-5 / SECEC).